The chain runs to 640 residues: Choline O-acetyltransferase (640 aa).

S17 is modified (phosphoserine). H334 acts as the Proton acceptor in catalysis. The residue at position 365 (S365) is a Phosphoserine. Residues 412–424 (GKTFIKKQKYSPD), S450, and Q551 contribute to the CoA site. The interval 614-640 (CSSRQPADSKPPAPKEKARGPSQAKQS) is disordered.

Belongs to the carnitine/choline acetyltransferase family. In terms of assembly, monomer.

It catalyses the reaction choline + acetyl-CoA = acetylcholine + CoA. In terms of biological role, catalyzes the reversible synthesis of acetylcholine (ACh) from acetyl CoA and choline at cholinergic synapses. The sequence is that of Choline O-acetyltransferase (Chat) from Rattus norvegicus (Rat).